We begin with the raw amino-acid sequence, 132 residues long: Ribonuclease P protein component 2 (132 aa).

Belongs to the eukaryotic/archaeal RNase P protein component 2 family. Consists of a catalytic RNA component and at least 4-5 protein subunits.

The protein localises to the cytoplasm. It carries out the reaction Endonucleolytic cleavage of RNA, removing 5'-extranucleotides from tRNA precursor.. Functionally, part of ribonuclease P, a protein complex that generates mature tRNA molecules by cleaving their 5'-ends. This chain is Ribonuclease P protein component 2, found in Methanosarcina acetivorans (strain ATCC 35395 / DSM 2834 / JCM 12185 / C2A).